Here is a 595-residue protein sequence, read N- to C-terminus: Putative laccase-18 (595 aa).

A signal peptide spans 1–29 (MEKLSTAASLFGVVVAATALAMAVVGGEA). Plastocyanin-like domains follow at residues 37-153 (MVHE…PRDG) and 162-316 (KDVP…YTGA). Residues asparagine 42 and asparagine 48 are each glycosylated (N-linked (GlcNAc...) asparagine). Cu cation-binding residues include histidine 87 and histidine 89. N-linked (GlcNAc...) asparagine glycosylation occurs at asparagine 121. Histidine 132 and histidine 134 together coordinate Cu cation. N-linked (GlcNAc...) asparagine glycans are attached at residues asparagine 206, asparagine 345, asparagine 382, asparagine 402, asparagine 409, asparagine 439, and asparagine 470. A Plastocyanin-like 3 domain is found at 429–571 (DFPVRPPRPF…ATAFIVEDGP (143 aa)). Asparagine 488, histidine 491, histidine 493, histidine 550, cysteine 551, histidine 552, histidine 556, and methionine 561 together coordinate Cu cation. A disordered region spans residues 570 to 595 (GPTPETSLPPPPPEFKRCGTNGLSQP).

It belongs to the multicopper oxidase family. It depends on Cu cation as a cofactor.

The protein localises to the secreted. Its subcellular location is the extracellular space. It is found in the apoplast. The catalysed reaction is 4 hydroquinone + O2 = 4 benzosemiquinone + 2 H2O. Lignin degradation and detoxification of lignin-derived products. In Oryza sativa subsp. indica (Rice), this protein is Putative laccase-18 (LAC18).